Here is a 126-residue protein sequence, read N- to C-terminus: MTAFVPDFGKAGGLVPAIAQDADTGEVLMMAWMNAEAFEMTLKTGEAHYFSRSRGRLWHKGGTSGHTQHIRAVRLDCDSDTILLLVEQRGGAACHEGYRSCFYREMKDGEVSICSPKVFDPKEVYK.

D76 is a binding site for Mg(2+). A Zn(2+)-binding site is contributed by C77. The Mg(2+) site is built by D78 and D80. Positions 94 and 101 each coordinate Zn(2+).

Belongs to the PRA-CH family. Homodimer. Mg(2+) serves as cofactor. It depends on Zn(2+) as a cofactor.

Its subcellular location is the cytoplasm. The enzyme catalyses 1-(5-phospho-beta-D-ribosyl)-5'-AMP + H2O = 1-(5-phospho-beta-D-ribosyl)-5-[(5-phospho-beta-D-ribosylamino)methylideneamino]imidazole-4-carboxamide. It functions in the pathway amino-acid biosynthesis; L-histidine biosynthesis; L-histidine from 5-phospho-alpha-D-ribose 1-diphosphate: step 3/9. In terms of biological role, catalyzes the hydrolysis of the adenine ring of phosphoribosyl-AMP. The polypeptide is Phosphoribosyl-AMP cyclohydrolase (Nitratidesulfovibrio vulgaris (strain ATCC 29579 / DSM 644 / CCUG 34227 / NCIMB 8303 / VKM B-1760 / Hildenborough) (Desulfovibrio vulgaris)).